The sequence spans 307 residues: Serine/threonine-protein phosphatase 4 catalytic subunit (307 aa).

Alanine 2 bears the N-acetylalanine mark. 4 residues coordinate Mn(2+): aspartate 54, histidine 56, aspartate 82, and asparagine 114. Histidine 115 (proton donor) is an active-site residue. Mn(2+)-binding residues include histidine 164 and histidine 238. Leucine methyl ester is present on leucine 307.

This sequence belongs to the PPP phosphatase family. PP-4 (PP-X) subfamily. Serine/threonine-protein phosphatase 4 (PP4) occurs in different assemblies of the catalytic and one or more regulatory subunits. Component of the PP4 complexes PPP4C-PPP4R1, PPP4C-PPP4R2, PPP4C-PPP4R2-PPP4R3A, PPP4C-PPP4R2-PPP4R3B and PPP4C-PPP4R4. The PPP4C-PPP4R2 complex appears to be a tetramer composed of 2 molecules of PPP4C and 2 molecules of PPP4R2. Interacts with REL, NFKB1/p50 and RELA. Interacts with SMN1 and GEMIN4. Interacts with IRS4 (phosphorylated). Interacts with SMEK1/PPP4R3A; the interaction requires PP4R2. Interacts with HDAC3. Mn(2+) is required as a cofactor. Post-translationally, methylation at the C-terminal Leu-307 is critical for interactions with regulatory subunits and functions in DNA repair.

It localises to the cytoplasm. The protein resides in the nucleus. The protein localises to the cytoskeleton. Its subcellular location is the microtubule organizing center. It is found in the centrosome. The enzyme catalyses O-phospho-L-seryl-[protein] + H2O = L-seryl-[protein] + phosphate. The catalysed reaction is O-phospho-L-threonyl-[protein] + H2O = L-threonyl-[protein] + phosphate. Protein phosphatase that is involved in many processes such as microtubule organization at centrosomes, maturation of spliceosomal snRNPs, apoptosis, DNA repair, tumor necrosis factor (TNF)-alpha signaling, activation of c-Jun N-terminal kinase MAPK8, regulation of histone acetylation, DNA damage checkpoint signaling, NF-kappa-B activation and cell migration. The PPP4C-PPP4R1 PP4 complex may play a role in dephosphorylation and regulation of HDAC3. The PPP4C-PPP4R2-PPP4R3A PP4 complex specifically dephosphorylates H2AX phosphorylated on Ser-140 (gamma-H2AX) generated during DNA replication and required for DNA DSB repair. Dephosphorylates NDEL1 at CDK1 phosphorylation sites and negatively regulates CDK1 activity in interphase. In response to DNA damage, catalyzes RPA2 dephosphorylation, an essential step for DNA repair since it allows the efficient RPA2-mediated recruitment of RAD51 to chromatin. The protein is Serine/threonine-protein phosphatase 4 catalytic subunit (PPP4C) of Oryctolagus cuniculus (Rabbit).